Reading from the N-terminus, the 897-residue chain is Pre-mRNA-splicing factor CWC22 homolog (897 aa).

Over residues Met1–Glu10 the composition is skewed to polar residues. The segment at Met1 to Ile155 is disordered. Basic and acidic residues-rich tracts occupy residues Ser36–Ser54, Arg93–Pro107, and Arg131–Ile155. The MIF4G domain occupies Lys194–Lys382. The segment at Asn444–Thr472 is disordered. Positions Ile447 to Glu466 are enriched in acidic residues. Positions Ala485–Met601 constitute an MI domain. Low complexity-rich tracts occupy residues Leu689 to Ser710 and Asp720 to Glu730. Positions Leu689–Arg897 are disordered. The segment covering Asn743–Arg897 has biased composition (basic and acidic residues).

This sequence belongs to the CWC22 family. Expressed in germ cells, oocytes, and sperm cells.

Its subcellular location is the nucleus. The protein resides in the nucleus speckle. Required for pre-mRNA splicing and for exon-junction complex (EJC) assembly. Hinders EIF4A3 from non-specifically binding RNA and escorts it to the splicing machinery to promote EJC assembly on mature mRNAs. Through its role in EJC assembly, required for nonsense-mediated mRNA decay. Plays a role in the nuclear retention of unspliced mRNAs. Plays a role in sex determination. Required for early embryogenesis and tissue differentiation. The sequence is that of Pre-mRNA-splicing factor CWC22 homolog from Caenorhabditis elegans.